We begin with the raw amino-acid sequence, 173 residues long: Putative metal-dependent hydrolase BCE33L2441 (173 aa).

The Zn(2+) site is built by histidine 65, histidine 156, and histidine 160.

It belongs to the metal hydrolase YfiT family. As to quaternary structure, homodimer. The cofactor is Zn(2+).

The protein resides in the cytoplasm. In terms of biological role, possible metal-dependent hydrolase. The protein is Putative metal-dependent hydrolase BCE33L2441 of Bacillus cereus (strain ZK / E33L).